We begin with the raw amino-acid sequence, 361 residues long: uncharacterized protein (361 aa).

A signal peptide spans 1–17 (MNLFIYVLLLSIWTSSC). At 18–47 (LDRNESNGSATAVTTHAEFKQTKLQELRRR) the chain is on the extracellular side. Residue asparagine 24 is glycosylated (N-linked (GlcNAc...) asparagine). Residues 48–68 (LLIIVIGTLITGYMVSCTCLL) form a helical membrane-spanning segment. The Cytoplasmic segment spans residues 69 to 361 (HYSCDSEEAH…EDIYKNSRNN (293 aa)). Residues 95-106 (SSKISFTDSKSP) show a composition bias toward polar residues. The tract at residues 95-197 (SSKISFTDSK…SQVSPSYPEK (103 aa)) is disordered. Over residues 144 to 158 (PSSQKKPSKPSAPKK) the composition is skewed to low complexity. The segment covering 169–185 (HRTRSPKKAHRQAHAHK) has biased composition (basic residues).

The protein localises to the membrane. This is an uncharacterized protein from Bos taurus (Bovine).